We begin with the raw amino-acid sequence, 361 residues long: Divinyl chlorophyll a/b light-harvesting protein PcbD (361 aa).

6 consecutive transmembrane segments (helical) span residues 27-47, 93-113, 140-160, 201-221, 248-268, and 315-335; these read FIAS…GSTL, IVHL…GILF, FILG…VEWA, VMGG…FHIV, AVLS…AFWC, and LTNV…WHAL.

Belongs to the PsbB/PsbC family. IsiA/Pcb subfamily. In terms of assembly, the antenna complex consists of divinyl chlorophylls (a and b) and divinyl chlorophyll a/b binding proteins and binds more divinyl chlorophyll b than does the antenna complex from high-light-adapted Prochlorococcus. Requires divinyl chlorophyll a as cofactor. The cofactor is divinyl chlorophyll b.

Its subcellular location is the cellular thylakoid membrane. The antenna complex functions as a light receptor, it captures and delivers excitation energy to photosystems II and I. The Prochlorales pcb genes are not related to higher plant LHCs. In Prochlorococcus marinus (strain SARG / CCMP1375 / SS120), this protein is Divinyl chlorophyll a/b light-harvesting protein PcbD (pcbD).